A 674-amino-acid chain; its full sequence is DNA ligase (674 aa).

Residues 34–38 (DFEFD), 83–84 (SL), and glutamate 117 each bind NAD(+). Catalysis depends on lysine 119, which acts as the N6-AMP-lysine intermediate. The NAD(+) site is built by arginine 140, glutamate 184, lysine 297, and lysine 321. 4 residues coordinate Zn(2+): cysteine 415, cysteine 418, cysteine 433, and cysteine 439. Residues 598-674 (LVNTNFEGQS…IDEDEFERML (77 aa)) form the BRCT domain.

Belongs to the NAD-dependent DNA ligase family. LigA subfamily. Mg(2+) is required as a cofactor. The cofactor is Mn(2+).

It carries out the reaction NAD(+) + (deoxyribonucleotide)n-3'-hydroxyl + 5'-phospho-(deoxyribonucleotide)m = (deoxyribonucleotide)n+m + AMP + beta-nicotinamide D-nucleotide.. DNA ligase that catalyzes the formation of phosphodiester linkages between 5'-phosphoryl and 3'-hydroxyl groups in double-stranded DNA using NAD as a coenzyme and as the energy source for the reaction. It is essential for DNA replication and repair of damaged DNA. This is DNA ligase from Chlorobaculum parvum (strain DSM 263 / NCIMB 8327) (Chlorobium vibrioforme subsp. thiosulfatophilum).